Reading from the N-terminus, the 122-residue chain is MAYEPMKPTKAGLEAPLEQIHKIRITLSSKNVKNLEKVCTDLVRGAKDKRLRVKGPVRMPTKVLKITTRKAPCGEGTNTWDRFELRVHKRVIDLFSSPDVVKQITSITIEPGVEVEVTIADS.

It belongs to the universal ribosomal protein uS10 family.

This chain is Small ribosomal subunit protein uS10y (RPS20B), found in Arabidopsis thaliana (Mouse-ear cress).